The sequence spans 447 residues: Glutamate--tRNA ligase 1 (447 aa).

Residues 10–20 (PSPTGMLHVGN) carry the 'HIGH' region motif. A 'KMSKS' region motif is present at residues 240–244 (KISKR). Residue Lys-243 coordinates ATP.

This sequence belongs to the class-I aminoacyl-tRNA synthetase family. Glutamate--tRNA ligase type 1 subfamily. Monomer.

The protein resides in the cytoplasm. It carries out the reaction tRNA(Glu) + L-glutamate + ATP = L-glutamyl-tRNA(Glu) + AMP + diphosphate. Catalyzes the attachment of glutamate to tRNA(Glu) in a two-step reaction: glutamate is first activated by ATP to form Glu-AMP and then transferred to the acceptor end of tRNA(Glu). In Rickettsia akari (strain Hartford), this protein is Glutamate--tRNA ligase 1.